Here is a 333-residue protein sequence, read N- to C-terminus: Anthranilate phosphoribosyltransferase (333 aa).

5-phospho-alpha-D-ribose 1-diphosphate contacts are provided by residues glycine 81, 84–85, threonine 89, 91–94, 109–117, and alanine 121; these read GD, NIST, and KHGNRSVSS. Glycine 81 lines the anthranilate pocket. Serine 93 is a Mg(2+) binding site. Asparagine 112 lines the anthranilate pocket. Arginine 167 provides a ligand contact to anthranilate. Residues aspartate 225 and glutamate 226 each contribute to the Mg(2+) site.

This sequence belongs to the anthranilate phosphoribosyltransferase family. Homodimer. Mg(2+) serves as cofactor.

The catalysed reaction is N-(5-phospho-beta-D-ribosyl)anthranilate + diphosphate = 5-phospho-alpha-D-ribose 1-diphosphate + anthranilate. It participates in amino-acid biosynthesis; L-tryptophan biosynthesis; L-tryptophan from chorismate: step 2/5. Functionally, catalyzes the transfer of the phosphoribosyl group of 5-phosphorylribose-1-pyrophosphate (PRPP) to anthranilate to yield N-(5'-phosphoribosyl)-anthranilate (PRA). In Haemophilus influenzae (strain PittGG), this protein is Anthranilate phosphoribosyltransferase.